Consider the following 671-residue polypeptide: DNA ligase (671 aa).

Residues 32–36 (DAEYD), 81–82 (SL), and Glu-113 contribute to the NAD(+) site. Lys-115 serves as the catalytic N6-AMP-lysine intermediate. Positions 136, 173, 290, and 314 each coordinate NAD(+). Residues Cys-408, Cys-411, Cys-426, and Cys-432 each coordinate Zn(2+). The region spanning 593-671 (EIDSPFAGKT…EAEMIRLLGA (79 aa)) is the BRCT domain.

Belongs to the NAD-dependent DNA ligase family. LigA subfamily. Mg(2+) serves as cofactor. Mn(2+) is required as a cofactor.

It carries out the reaction NAD(+) + (deoxyribonucleotide)n-3'-hydroxyl + 5'-phospho-(deoxyribonucleotide)m = (deoxyribonucleotide)n+m + AMP + beta-nicotinamide D-nucleotide.. In terms of biological role, DNA ligase that catalyzes the formation of phosphodiester linkages between 5'-phosphoryl and 3'-hydroxyl groups in double-stranded DNA using NAD as a coenzyme and as the energy source for the reaction. It is essential for DNA replication and repair of damaged DNA. This Salmonella gallinarum (strain 287/91 / NCTC 13346) protein is DNA ligase.